A 124-amino-acid polypeptide reads, in one-letter code: Large ribosomal subunit protein bL12 (124 aa).

It belongs to the bacterial ribosomal protein bL12 family. As to quaternary structure, homodimer. Part of the ribosomal stalk of the 50S ribosomal subunit. Forms a multimeric L10(L12)X complex, where L10 forms an elongated spine to which 2 to 4 L12 dimers bind in a sequential fashion. Binds GTP-bound translation factors.

Functionally, forms part of the ribosomal stalk which helps the ribosome interact with GTP-bound translation factors. Is thus essential for accurate translation. This is Large ribosomal subunit protein bL12 from Christiangramia forsetii (strain DSM 17595 / CGMCC 1.15422 / KT0803) (Gramella forsetii).